The chain runs to 696 residues: MEIKKRIEELKNNQTGLTFYSSQELNDLEKIVKLREDLNKYRDSYYNDNKSLISDYEFDILLKELESLEEKYPQYKEISSPTTSVGASLKENKFKKVEHLHPMLSLANSYNIGEIVEFIERIKKKIPKEQELKYCLEVKLDGLSISLTYRQGKLVRAVTRGDGFIGEDVTENILEIASIVKTLPQAIDMEIRGEVVLPLASFEKLNNERLEKGEELFANPRNAASGTLRQLDSKIVKDRGLDAYFYFLVEADKLGLKSHSESIKFLESMGIKTTGIFELLETSKDIEKRINYWEKERESLPYETDGLVIKVDEINLWDEIGYTSKTPRWAIAYKFPAHQVSTVLNDVTWQVGRTGKLTPVAELQEVELSGSKVKRASLHNISEIQRKDIRIGDRVFIEKAAEIIPQVVKAIKEERTGNEKVIEEPTCCPICNHKLEREEGLVDIKCINEECPAKVQGEIEYFVSRDALNIMGLGSKIVEKFIDLGYIKTVVDIFDLKNHREALENIDKMGKKSIENLLNSIEESKNRDYDKILYALGIAEIGKVTSKILAKASKNIDKLMAMTFEDLTSIEGIGEIAANEIIAFFTKEKNQKIIQGLKEKGLKFEIKESEASVQNVNPNFVGKNFLFTGTLKHFTREQIKEEIEKLGGKNLSSVSKNLDYLIVGEKAGSKLKKAQEIPTIKILTEEEFIELKDKFD.

NAD(+) contacts are provided by residues 55–59 (DYEFD), 105–106 (SL), and glutamate 137. Residue lysine 139 is the N6-AMP-lysine intermediate of the active site. NAD(+)-binding residues include arginine 160, glutamate 194, lysine 310, and lysine 334. Cysteine 428, cysteine 431, cysteine 446, and cysteine 451 together coordinate Zn(2+). The 82-residue stretch at 615-696 (NVNPNFVGKN…EFIELKDKFD (82 aa)) folds into the BRCT domain.

The protein belongs to the NAD-dependent DNA ligase family. LigA subfamily. The cofactor is Mg(2+). Requires Mn(2+) as cofactor.

It catalyses the reaction NAD(+) + (deoxyribonucleotide)n-3'-hydroxyl + 5'-phospho-(deoxyribonucleotide)m = (deoxyribonucleotide)n+m + AMP + beta-nicotinamide D-nucleotide.. DNA ligase that catalyzes the formation of phosphodiester linkages between 5'-phosphoryl and 3'-hydroxyl groups in double-stranded DNA using NAD as a coenzyme and as the energy source for the reaction. It is essential for DNA replication and repair of damaged DNA. In Fusobacterium nucleatum subsp. nucleatum (strain ATCC 25586 / DSM 15643 / BCRC 10681 / CIP 101130 / JCM 8532 / KCTC 2640 / LMG 13131 / VPI 4355), this protein is DNA ligase.